A 240-amino-acid polypeptide reads, in one-letter code: Probable transcriptional regulatory protein MXAN_7062 (240 aa).

The protein belongs to the TACO1 family.

The protein localises to the cytoplasm. This chain is Probable transcriptional regulatory protein MXAN_7062, found in Myxococcus xanthus (strain DK1622).